Here is a 428-residue protein sequence, read N- to C-terminus: MEIKQIKAREVIDSRGNPTVEADVILNDDTIGSAMVPSGASTGQKEALELRDRDKSRYLGKGVLKAVKFVNTEICDTLIGFDINNLSKIDQTMIDLDGTKTKSRLGANTILSVSLAAAHANANRQHKPLYASLNQGGNYKLPVPMMNIINGGEHANNNIDIQEFMIIPVGAPSFKEALRYGIEVFHHLKSILEIKGMSTTVGDEGGFAPNLASNEDAIKIILEAINNAGYKPGKDIFIGIDAASSEFYDNDNKTYNLISENKSFSSEEFVNYLAKWVENYPIISIEDGMDENDWNGWNLLTKKLGDKVQLVGDDLYVTNSKILKQGIERNIANSILIKVNQIGTLTETFATIKVAMNARYTSIMSHRSGETEDTTIADLAVACTCSQIKTGSLSRSDRLAKYNRLLRIEEELGTQAVYPGLNAFNHLN.

Q162 lines the (2R)-2-phosphoglycerate pocket. The active-site Proton donor is E204. The Mg(2+) site is built by D241, E286, and D313. (2R)-2-phosphoglycerate is bound by residues K338, R367, S368, and K389. Residue K338 is the Proton acceptor of the active site.

This sequence belongs to the enolase family. Component of the RNA degradosome, a multiprotein complex involved in RNA processing and mRNA degradation. Mg(2+) is required as a cofactor.

The protein resides in the cytoplasm. It is found in the secreted. The protein localises to the cell surface. The enzyme catalyses (2R)-2-phosphoglycerate = phosphoenolpyruvate + H2O. It functions in the pathway carbohydrate degradation; glycolysis; pyruvate from D-glyceraldehyde 3-phosphate: step 4/5. Catalyzes the reversible conversion of 2-phosphoglycerate (2-PG) into phosphoenolpyruvate (PEP). It is essential for the degradation of carbohydrates via glycolysis. This chain is Enolase, found in Vesicomyosocius okutanii subsp. Calyptogena okutanii (strain HA).